A 524-amino-acid polypeptide reads, in one-letter code: Bifunctional purine biosynthesis protein PurH (524 aa).

One can recognise an MGS-like domain in the interval 1 to 149 (MSDPLIKRAL…KNNESVTVLT (149 aa)).

This sequence belongs to the PurH family.

The enzyme catalyses (6R)-10-formyltetrahydrofolate + 5-amino-1-(5-phospho-beta-D-ribosyl)imidazole-4-carboxamide = 5-formamido-1-(5-phospho-D-ribosyl)imidazole-4-carboxamide + (6S)-5,6,7,8-tetrahydrofolate. The catalysed reaction is IMP + H2O = 5-formamido-1-(5-phospho-D-ribosyl)imidazole-4-carboxamide. It functions in the pathway purine metabolism; IMP biosynthesis via de novo pathway; 5-formamido-1-(5-phospho-D-ribosyl)imidazole-4-carboxamide from 5-amino-1-(5-phospho-D-ribosyl)imidazole-4-carboxamide (10-formyl THF route): step 1/1. Its pathway is purine metabolism; IMP biosynthesis via de novo pathway; IMP from 5-formamido-1-(5-phospho-D-ribosyl)imidazole-4-carboxamide: step 1/1. This is Bifunctional purine biosynthesis protein PurH from Chlorobium phaeovibrioides (strain DSM 265 / 1930) (Prosthecochloris vibrioformis (strain DSM 265)).